A 410-amino-acid chain; its full sequence is Interleukin-1 receptor type 2 (410 aa).

A signal peptide spans 1–13 (MFILLVLVTGVSA). At 14-355 (FTTPTVVHTG…SQSLHTTVKE (342 aa)) the chain is on the extracellular side. Ig-like C2-type domains lie at 35 to 136 (PTVH…VELK), 146 to 237 (PHVS…RNIE), and 249 to 357 (PVII…KEVS). 3 disulfides stabilise this stretch: Cys42–Cys128, Cys64–Cys120, and Cys164–Cys219. Residues Asn124, Asn208, Asn231, and Asn289 are each glycosylated (N-linked (GlcNAc...) asparagine). Cysteines 270 and 338 form a disulfide. The helical transmembrane segment at 356 to 381 (VSSTFSWSIALAPLSLIILVVGAIWM) threads the bilayer. The Cytoplasmic segment spans residues 382 to 410 (RRRCKRRAGKTYGLTKLRTDNQDFPSSPN).

Belongs to the interleukin-1 receptor family. In terms of assembly, associates with IL1RAP to form a non-signaling interleukin-1 receptor complex. Post-translationally, a soluble form (sIL1R2) can also be produced by proteolytic cleavage at the cell surface (shedding) involving a metalloproteinase. Strongly expressed in B-cells, with levels 21 times higher than IL1R1. In T-cells expressed 5 times more compared with IL1R1.

The protein localises to the membrane. It is found in the cell membrane. It localises to the secreted. Its function is as follows. Non-signaling receptor for IL1A, IL1B and IL1RN. Reduces IL1B activities. Serves as a decoy receptor by competitive binding to IL1B and preventing its binding to IL1R1. Also modulates cellular response through non-signaling association with IL1RAP after binding to IL1B. IL1R2 (membrane and secreted forms) preferentially binds IL1B and poorly IL1A and IL1RN. The secreted IL1R2 recruits secreted IL1RAP with high affinity; this complex formation may be the dominant mechanism for neutralization of IL1B by secreted/soluble receptors. The protein is Interleukin-1 receptor type 2 (Il1r2) of Mus musculus (Mouse).